The following is a 201-amino-acid chain: Recombination protein RecR (201 aa).

The C4-type zinc finger occupies 57–74; the sequence is CRICGNITENSVNPCAIC. A Toprim domain is found at 82–178; that stretch reads STVFVVENSR…KVTRLAHGLA (97 aa).

The protein belongs to the RecR family.

May play a role in DNA repair. It seems to be involved in an RecBC-independent recombinational process of DNA repair. It may act with RecF and RecO. This Leuconostoc citreum (strain KM20) protein is Recombination protein RecR.